A 413-amino-acid polypeptide reads, in one-letter code: Multifunctional CCA protein (413 aa).

Positions 8 and 11 each coordinate ATP. Residues glycine 8 and arginine 11 each contribute to the CTP site. Mg(2+) is bound by residues aspartate 21 and aspartate 23. The ATP site is built by arginine 91, arginine 137, and arginine 140. Positions 91, 137, and 140 each coordinate CTP. Positions 228 to 329 (TGIHTLMTLS…VKLFDSIDAW (102 aa)) constitute an HD domain.

This sequence belongs to the tRNA nucleotidyltransferase/poly(A) polymerase family. Bacterial CCA-adding enzyme type 1 subfamily. As to quaternary structure, monomer. Can also form homodimers and oligomers. It depends on Mg(2+) as a cofactor. Requires Ni(2+) as cofactor.

The catalysed reaction is a tRNA precursor + 2 CTP + ATP = a tRNA with a 3' CCA end + 3 diphosphate. It catalyses the reaction a tRNA with a 3' CCA end + 2 CTP + ATP = a tRNA with a 3' CCACCA end + 3 diphosphate. In terms of biological role, catalyzes the addition and repair of the essential 3'-terminal CCA sequence in tRNAs without using a nucleic acid template. Adds these three nucleotides in the order of C, C, and A to the tRNA nucleotide-73, using CTP and ATP as substrates and producing inorganic pyrophosphate. tRNA 3'-terminal CCA addition is required both for tRNA processing and repair. Also involved in tRNA surveillance by mediating tandem CCA addition to generate a CCACCA at the 3' terminus of unstable tRNAs. While stable tRNAs receive only 3'-terminal CCA, unstable tRNAs are marked with CCACCA and rapidly degraded. The protein is Multifunctional CCA protein of Citrobacter koseri (strain ATCC BAA-895 / CDC 4225-83 / SGSC4696).